A 157-amino-acid polypeptide reads, in one-letter code: DNA gyrase inhibitor (157 aa).

The protein belongs to the DNA gyrase inhibitor family. Interacts with DNA gyrase.

It is found in the cytoplasm. Functionally, inhibits the supercoiling activity of DNA gyrase. Acts by inhibiting DNA gyrase at an early step, prior to (or at the step of) binding of DNA by the gyrase. It protects cells against toxins that target DNA gyrase, by inhibiting activity of these toxins and reducing the formation of lethal double-strand breaks in the cell. The polypeptide is DNA gyrase inhibitor (Yersinia enterocolitica serotype O:8 / biotype 1B (strain NCTC 13174 / 8081)).